A 1410-amino-acid polypeptide reads, in one-letter code: DNA-directed RNA polymerase subunit beta' (1410 aa).

Residues cysteine 70, cysteine 72, cysteine 85, and cysteine 88 each coordinate Zn(2+). 3 residues coordinate Mg(2+): aspartate 460, aspartate 462, and aspartate 464. Zn(2+) is bound by residues cysteine 814, cysteine 888, cysteine 895, and cysteine 898.

This sequence belongs to the RNA polymerase beta' chain family. As to quaternary structure, the RNAP catalytic core consists of 2 alpha, 1 beta, 1 beta' and 1 omega subunit. When a sigma factor is associated with the core the holoenzyme is formed, which can initiate transcription. It depends on Mg(2+) as a cofactor. Zn(2+) serves as cofactor.

It carries out the reaction RNA(n) + a ribonucleoside 5'-triphosphate = RNA(n+1) + diphosphate. DNA-dependent RNA polymerase catalyzes the transcription of DNA into RNA using the four ribonucleoside triphosphates as substrates. The polypeptide is DNA-directed RNA polymerase subunit beta' (Shewanella denitrificans (strain OS217 / ATCC BAA-1090 / DSM 15013)).